The following is a 362-amino-acid chain: P2Y purinoceptor 1 (362 aa).

Over 1 to 40 (MTEALISAALNGTQPELLAGGWAAGNASTKCSLTKTGFQF) the chain is Extracellular. 2 N-linked (GlcNAc...) asparagine glycosylation sites follow: N11 and N26. Intrachain disulfides connect C31–C285 and C113–C191. An ADP-binding site is contributed by K35. A helical membrane pass occupies residues 41–63 (YYLPTVYILVFITGFLGNSVAIW). Topologically, residues 64–76 (MFVFHMRPWSGIS) are cytoplasmic. The helical transmembrane segment at 77 to 98 (VYMFNLALADFLYVLTLPALIF) threads the bilayer. The Extracellular portion of the chain corresponds to 99 to 114 (YYFNKTDWIFGDVMCK). An N-linked (GlcNAc...) asparagine glycan is attached at N102. The chain crosses the membrane as a helical span at residues 115–136 (LQRFIFHVNLYGSILFLTCISV). Residues 137-155 (HRYTGVVHPLKSLGRLKKK) are Cytoplasmic-facing. A helical transmembrane segment spans residues 156-177 (NAVYVSSLVWALVVAVIAPILF). Residues 178–203 (YSGTGVRRNKTITCYDTTADEYLRSY) lie on the Extracellular side of the membrane. The N-linked (GlcNAc...) asparagine glycan is linked to N186. 192–194 (YDT) is a binding site for ADP. The helical transmembrane segment at 204–226 (FVYSMCTTVFMFCIPFIVILGCY) threads the bilayer. Residues 227–249 (GLIVKALIYKDLDNSPLRRKSIY) are Cytoplasmic-facing. A helical membrane pass occupies residues 250–273 (LVIIVLTVFAVSYLPFHVMKTLNL). Residues 272 to 276 (NLRAR), 292 to 295 (YATY), and R299 each bind ADP. Residues 274 to 292 (RARLDFQTPQMCAFNDKVY) lie on the Extracellular side of the membrane. Residues 293–314 (ATYQVTRGLASLNSCVDPILYF) form a helical membrane-spanning segment. Over 315 to 362 (LAGDTFRRRLSRATRKSSRRSEPNVQSKSEEMTLNILTEYKQNGDTSL) the chain is Cytoplasmic.

The protein belongs to the G-protein coupled receptor 1 family. In terms of tissue distribution, mainly found in blood, brain, and lung. To a lesser extent in stomach, gut and skeletal muscle.

The protein resides in the cell membrane. Functionally, receptor for extracellular adenine nucleotides such as ADP. In platelets, binding to ADP leads to mobilization of intracellular calcium ions via activation of phospholipase C, a change in platelet shape, and ultimately platelet aggregation. The sequence is that of P2Y purinoceptor 1 (P2RY1) from Meleagris gallopavo (Wild turkey).